A 217-amino-acid chain; its full sequence is 3,4-dihydroxy-2-butanone 4-phosphate synthase (217 aa).

D-ribulose 5-phosphate is bound by residues 37 to 38 (RE), Asp-42, 150 to 154 (RRGHT), and Glu-174. Glu-38 lines the Mg(2+) pocket. Position 153 (His-153) interacts with Mg(2+).

Belongs to the DHBP synthase family. As to quaternary structure, homodimer. Requires Mg(2+) as cofactor. Mn(2+) is required as a cofactor.

The enzyme catalyses D-ribulose 5-phosphate = (2S)-2-hydroxy-3-oxobutyl phosphate + formate + H(+). Its pathway is cofactor biosynthesis; riboflavin biosynthesis; 2-hydroxy-3-oxobutyl phosphate from D-ribulose 5-phosphate: step 1/1. Catalyzes the conversion of D-ribulose 5-phosphate to formate and 3,4-dihydroxy-2-butanone 4-phosphate. The chain is 3,4-dihydroxy-2-butanone 4-phosphate synthase from Shewanella sp. (strain W3-18-1).